The sequence spans 205 residues: Metalloproteinase inhibitor 1 (205 aa).

The N-terminal stretch at 1–24 is a signal peptide; it reads MMAPFASLASGILLLLSLIASSKA. Cysteine 25 serves as a coordination point for Zn(2+). The tract at residues 25 to 28 is involved in metalloproteinase-binding; that stretch reads CSCA. Intrachain disulfides connect cysteine 25–cysteine 94, cysteine 27–cysteine 123, cysteine 37–cysteine 148, cysteine 151–cysteine 197, cysteine 156–cysteine 161, and cysteine 169–cysteine 189. An NTR domain is found at 25-148; sequence CSCAPPHPQT…AFSKTYSAGC (124 aa). Residue asparagine 54 is glycosylated (N-linked (GlcNAc...) asparagine). Residues 91 to 92 are involved in metalloproteinase-binding; the sequence is ES. Asparagine 102 carries N-linked (GlcNAc...) asparagine glycosylation. Serine 179 bears the Phosphoserine mark.

This sequence belongs to the protease inhibitor I35 (TIMP) family. As to quaternary structure, interacts with MMP1, MMP3, MMP10 and MMP13, but has only very low affinity for MMP14. Interacts with CD63; identified in a complex with CD63 and ITGB1. In terms of processing, the activity of TIMP1 is dependent on the presence of disulfide bonds. N-glycosylated. In terms of tissue distribution, found in fetal and adult tissues. Highest levels are found in bone. Also found in lung, ovary and uterus.

It localises to the secreted. Metalloproteinase inhibitor that functions by forming one to one complexes with target metalloproteinases, such as collagenases, and irreversibly inactivates them by binding to their catalytic zinc cofactor. Acts on MMP1, MMP2, MMP3, MMP7, MMP8, MMP9, MMP10, MMP11, MMP12, MMP13 and MMP16. Does not act on MMP14. Also functions as a growth factor that regulates cell differentiation, migration and cell death and activates cellular signaling cascades via CD63 and ITGB1. Plays a role in integrin signaling. This Mus musculus (Mouse) protein is Metalloproteinase inhibitor 1 (Timp1).